We begin with the raw amino-acid sequence, 202 residues long: Probable molybdenum cofactor guanylyltransferase (202 aa).

Residues leucine 13–glycine 15, lysine 25, aspartate 71, and aspartate 103 contribute to the GTP site. Aspartate 103 contacts Mg(2+).

It belongs to the MobA family. Mg(2+) serves as cofactor.

Its subcellular location is the cytoplasm. The catalysed reaction is Mo-molybdopterin + GTP + H(+) = Mo-molybdopterin guanine dinucleotide + diphosphate. Transfers a GMP moiety from GTP to Mo-molybdopterin (Mo-MPT) cofactor (Moco or molybdenum cofactor) to form Mo-molybdopterin guanine dinucleotide (Mo-MGD) cofactor. The chain is Probable molybdenum cofactor guanylyltransferase from Opitutus terrae (strain DSM 11246 / JCM 15787 / PB90-1).